A 1044-amino-acid polypeptide reads, in one-letter code: Ras GTPase-activating protein 1 (1044 aa).

Met-1 is subject to N-acetylmethionine. Positions 1-160 are hydrophobic; the sequence is MMAAEAGGEE…DEGDSLDGPE (160 aa). The SH2 1 domain occupies 178-269; it reads WYHGKLDRTI…LKGEKLLYPV (92 aa). The SH3 domain maps to 276–338; the sequence is EDRRRVRAIL…VEDLVEEVGR (63 aa). In terms of domain architecture, SH2 2 spans 348 to 438; the sequence is WFHGKISKQE…VEGYYLKEPV (91 aa). One can recognise a PH domain in the interval 471–574; that stretch reads NIVKKGYLLK…WMKGLQAFCN (104 aa). Residues 574–687 form the C2 domain; it reads NLRKSSPGTS…QKGHATDEWF (114 aa). At Tyr-612 the chain carries Phosphotyrosine. Repeats lie at residues 646 to 664 and 665 to 683; these read PDIN…KSKD and PDIL…GHAT. Positions 761–971 constitute a Ras-GAP domain; sequence KLESLLLCTL…HRMIMFLDEL (211 aa). Ser-828 is modified (phosphoserine).

As to quaternary structure, interacts with SQSTM1. Interacts with SPSB1; the interaction does not promote degradation. Interacts with CAV2 (tyrosine phosphorylated form). Directly interacts with NCK1. Interacts with PDGFRB (tyrosine phosphorylated). Interacts (via SH2 domain) with the 'Tyr-9' phosphorylated form of PDPK1. Interacts with tyrosine-phosphorylated EPHB4. Post-translationally, phosphorylated by SRC and LCK. The phosphorylation SRC inhibits its ability to stimulate the Ras-GTPase activity, whereas phosphorylation by LCK does not display any effect on stimulation activity.

It localises to the cytoplasm. Functionally, inhibitory regulator of the Ras-cyclic AMP pathway. Stimulates the GTPase of normal but not oncogenic Ras p21. This Bos taurus (Bovine) protein is Ras GTPase-activating protein 1 (RASA1).